The primary structure comprises 334 residues: N-acetyl-gamma-glutamyl-phosphate reductase (334 aa).

C154 is a catalytic residue.

The protein belongs to the NAGSA dehydrogenase family. Type 1 subfamily.

It is found in the cytoplasm. It catalyses the reaction N-acetyl-L-glutamate 5-semialdehyde + phosphate + NADP(+) = N-acetyl-L-glutamyl 5-phosphate + NADPH + H(+). It functions in the pathway amino-acid biosynthesis; L-arginine biosynthesis; N(2)-acetyl-L-ornithine from L-glutamate: step 3/4. Catalyzes the NADPH-dependent reduction of N-acetyl-5-glutamyl phosphate to yield N-acetyl-L-glutamate 5-semialdehyde. This is N-acetyl-gamma-glutamyl-phosphate reductase from Aliivibrio fischeri (strain ATCC 700601 / ES114) (Vibrio fischeri).